Here is a 450-residue protein sequence, read N- to C-terminus: 3-phosphoshikimate 1-carboxyvinyltransferase (450 aa).

The interval 1–26 (MSAHGDPIPMTAHPSGPLSGTAQVPG) is disordered. Residues Lys-28, Ser-29, and Arg-33 each coordinate 3-phosphoshikimate. Lys-28 contributes to the phosphoenolpyruvate binding site. Gly-101 and Arg-129 together coordinate phosphoenolpyruvate. Residues Ser-174, Gln-176, Asp-327, and Lys-354 each contribute to the 3-phosphoshikimate site. Gln-176 serves as a coordination point for phosphoenolpyruvate. The Proton acceptor role is filled by Asp-327. Phosphoenolpyruvate contacts are provided by Arg-358 and Arg-403.

Belongs to the EPSP synthase family. As to quaternary structure, monomer.

It localises to the cytoplasm. The catalysed reaction is 3-phosphoshikimate + phosphoenolpyruvate = 5-O-(1-carboxyvinyl)-3-phosphoshikimate + phosphate. It functions in the pathway metabolic intermediate biosynthesis; chorismate biosynthesis; chorismate from D-erythrose 4-phosphate and phosphoenolpyruvate: step 6/7. Its function is as follows. Catalyzes the transfer of the enolpyruvyl moiety of phosphoenolpyruvate (PEP) to the 5-hydroxyl of shikimate-3-phosphate (S3P) to produce enolpyruvyl shikimate-3-phosphate and inorganic phosphate. This chain is 3-phosphoshikimate 1-carboxyvinyltransferase, found in Dinoroseobacter shibae (strain DSM 16493 / NCIMB 14021 / DFL 12).